Consider the following 434-residue polypeptide: Histidinol dehydrogenase (434 aa).

Tyrosine 130, glutamine 188, and asparagine 211 together coordinate NAD(+). Residues serine 237, glutamine 259, and histidine 262 each contribute to the substrate site. Residues glutamine 259 and histidine 262 each coordinate Zn(2+). Residues glutamate 326 and histidine 327 each act as proton acceptor in the active site. Substrate is bound by residues histidine 327, aspartate 360, glutamate 414, and histidine 419. Aspartate 360 contacts Zn(2+). Histidine 419 provides a ligand contact to Zn(2+).

Belongs to the histidinol dehydrogenase family. As to quaternary structure, homodimer. Zn(2+) is required as a cofactor. It depends on Mn(2+) as a cofactor.

The enzyme catalyses L-histidinol + 2 NAD(+) + H2O = L-histidine + 2 NADH + 3 H(+). It functions in the pathway amino-acid biosynthesis; L-histidine biosynthesis; L-histidine from 5-phospho-alpha-D-ribose 1-diphosphate: step 9/9. With respect to regulation, activity is lost when the metal is removed through urea denaturation or chelation, and can be regained by addition of metal. In terms of biological role, catalyzes the sequential NAD-dependent oxidations of L-histidinol to L-histidinaldehyde and then to L-histidine. This Salmonella typhimurium (strain LT2 / SGSC1412 / ATCC 700720) protein is Histidinol dehydrogenase (hisD).